A 426-amino-acid chain; its full sequence is Bile acid CoA-transferase BaiF (426 aa).

Residue Asp168 is the Nucleophile of the active site.

This sequence belongs to the CoA-transferase III family.

It carries out the reaction lithocholoyl-CoA + cholate = choloyl-CoA + lithocholate. It catalyses the reaction deoxycholoyl-CoA + cholate = choloyl-CoA + deoxycholate. The catalysed reaction is allodeoxycholoyl-CoA + cholate = allodeoxycholate + choloyl-CoA. The enzyme catalyses allocholate + deoxycholoyl-CoA = allocholoyl-CoA + deoxycholate. It carries out the reaction allocholate + lithocholoyl-CoA = allocholoyl-CoA + lithocholate. It catalyses the reaction allocholate + allodeoxycholoyl-CoA = allocholoyl-CoA + allodeoxycholate. The catalysed reaction is lithocholoyl-CoA + chenodeoxycholate = chenodeoxycholoyl-CoA + lithocholate. The enzyme catalyses ursodeoxycholate + deoxycholoyl-CoA = ursodeoxycholoyl-CoA + deoxycholate. It carries out the reaction ursodeoxycholate + lithocholoyl-CoA = ursodeoxycholoyl-CoA + lithocholate. It catalyses the reaction allodeoxycholoyl-CoA + ursodeoxycholate = ursodeoxycholoyl-CoA + allodeoxycholate. The catalysed reaction is beta-muricholate + lithocholoyl-CoA = beta-muricholoyl-CoA + lithocholate. The enzyme catalyses beta-muricholate + deoxycholoyl-CoA = beta-muricholoyl-CoA + deoxycholate. It carries out the reaction beta-muricholate + allodeoxycholoyl-CoA = beta-muricholoyl-CoA + allodeoxycholate. It catalyses the reaction choloyl-CoA + H2O = cholate + CoA + H(+). The catalysed reaction is chenodeoxycholoyl-CoA + H2O = chenodeoxycholate + CoA + H(+). It functions in the pathway lipid metabolism; bile acid biosynthesis. In terms of biological role, functions in the bile acid 7alpha-dehydroxylation pathway, which forms secondary bile acids via the 7alpha-dehydroxylation of primary bile acids, and is carried out by intestinal anaerobic bacteria. Acts as a bile acid CoA transferase with broad bile acid substrate specificity. Catalyzes the transfer of the CoA moiety of secondary bile acid-CoA compounds to primary bile acids. Can use lithocholoyl-CoA, deoxycholoyl-CoA and allodeoxycholoyl-CoA as bile acid CoA donors and cholate, allocholate, chenodeoxycholate, ursodeoxycholate, and beta-muricholate as bile acid CoA acceptors. Also displays CoA hydrolase activity, being able to catalyze the hydrolysis of choloyl-CoA, 3-dehydrocholoyl-CoA, and chenodeoxycholoyl-CoA, releasing CoA and the corresponding free bile acid. However, this latter activity may not represent the actual activity of this enzyme, since using a transferase rather than hydrolase, the bacteria conserve the thioester bond energy, saving ATP molecules. Shows no hydrolytic activity with acetyl-CoA, isovaleryl-CoA, palmitoyl-CoA, or phenylacetyl-CoA as substrates. This Clostridium scindens (strain JCM 10418 / VPI 12708) protein is Bile acid CoA-transferase BaiF.